The primary structure comprises 477 residues: Aspartyl/glutamyl-tRNA(Asn/Gln) amidotransferase subunit B (477 aa).

Belongs to the GatB/GatE family. GatB subfamily. As to quaternary structure, heterotrimer of A, B and C subunits.

It catalyses the reaction L-glutamyl-tRNA(Gln) + L-glutamine + ATP + H2O = L-glutaminyl-tRNA(Gln) + L-glutamate + ADP + phosphate + H(+). The enzyme catalyses L-aspartyl-tRNA(Asn) + L-glutamine + ATP + H2O = L-asparaginyl-tRNA(Asn) + L-glutamate + ADP + phosphate + 2 H(+). Functionally, allows the formation of correctly charged Asn-tRNA(Asn) or Gln-tRNA(Gln) through the transamidation of misacylated Asp-tRNA(Asn) or Glu-tRNA(Gln) in organisms which lack either or both of asparaginyl-tRNA or glutaminyl-tRNA synthetases. The reaction takes place in the presence of glutamine and ATP through an activated phospho-Asp-tRNA(Asn) or phospho-Glu-tRNA(Gln). The chain is Aspartyl/glutamyl-tRNA(Asn/Gln) amidotransferase subunit B from Clostridium tetani (strain Massachusetts / E88).